A 427-amino-acid chain; its full sequence is Glutamate-1-semialdehyde 2,1-aminomutase (427 aa).

Lysine 265 carries the post-translational modification N6-(pyridoxal phosphate)lysine.

Belongs to the class-III pyridoxal-phosphate-dependent aminotransferase family. HemL subfamily. Homodimer. Pyridoxal 5'-phosphate is required as a cofactor.

It localises to the cytoplasm. It carries out the reaction (S)-4-amino-5-oxopentanoate = 5-aminolevulinate. Its pathway is porphyrin-containing compound metabolism; protoporphyrin-IX biosynthesis; 5-aminolevulinate from L-glutamyl-tRNA(Glu): step 2/2. The sequence is that of Glutamate-1-semialdehyde 2,1-aminomutase from Burkholderia vietnamiensis (strain G4 / LMG 22486) (Burkholderia cepacia (strain R1808)).